We begin with the raw amino-acid sequence, 97 residues long: Large ribosomal subunit protein uL23 (97 aa).

The protein belongs to the universal ribosomal protein uL23 family. Part of the 50S ribosomal subunit. Contacts protein L29, and trigger factor when it is bound to the ribosome.

In terms of biological role, one of the early assembly proteins it binds 23S rRNA. One of the proteins that surrounds the polypeptide exit tunnel on the outside of the ribosome. Forms the main docking site for trigger factor binding to the ribosome. This is Large ribosomal subunit protein uL23 from Brucella canis (strain ATCC 23365 / NCTC 10854 / RM-666).